Here is a 101-residue protein sequence, read N- to C-terminus: Putative pterin-4-alpha-carbinolamine dehydratase (101 aa).

This sequence belongs to the pterin-4-alpha-carbinolamine dehydratase family.

The catalysed reaction is (4aS,6R)-4a-hydroxy-L-erythro-5,6,7,8-tetrahydrobiopterin = (6R)-L-erythro-6,7-dihydrobiopterin + H2O. The chain is Putative pterin-4-alpha-carbinolamine dehydratase (dcoH) from Streptomyces avermitilis (strain ATCC 31267 / DSM 46492 / JCM 5070 / NBRC 14893 / NCIMB 12804 / NRRL 8165 / MA-4680).